Here is a 62-residue protein sequence, read N- to C-terminus: uncharacterized protein (62 aa).

This is an uncharacterized protein from His1 virus (isolate Australia/Victoria) (His1V).